Consider the following 332-residue polypeptide: Small ribosomal subunit biogenesis GTPase RsgA (332 aa).

Residues 103-259 (RQQLIAANLD…LIDTPGMREL (157 aa)) enclose the CP-type G domain. GTP contacts are provided by residues 148–151 (TKVD) and 201–209 (GSSGAGKST). Positions 281, 286, 288, and 294 each coordinate Zn(2+).

The protein belongs to the TRAFAC class YlqF/YawG GTPase family. RsgA subfamily. In terms of assembly, monomer. Associates with 30S ribosomal subunit, binds 16S rRNA. Zn(2+) is required as a cofactor.

It is found in the cytoplasm. Functionally, one of several proteins that assist in the late maturation steps of the functional core of the 30S ribosomal subunit. Helps release RbfA from mature subunits. May play a role in the assembly of ribosomal proteins into the subunit. Circularly permuted GTPase that catalyzes slow GTP hydrolysis, GTPase activity is stimulated by the 30S ribosomal subunit. In Xylella fastidiosa (strain M23), this protein is Small ribosomal subunit biogenesis GTPase RsgA.